The following is a 270-amino-acid chain: Maximins-S type D (270 aa).

A signal peptide spans 1–18; it reads MNFNYFILVLFFITSGHA. 2 propeptides span residues 19 to 35 and 52 to 65; these read KSET…HIKR and SAEE…LVTR. Asn-83 bears the Asparagine amide mark. Positions 87 to 100 are excised as a propeptide; the sequence is SAEEQDLAEDLVTR. Lys-118 bears the Lysine amide mark. A propeptide spanning residues 122 to 135 is cleaved from the precursor; that stretch reads SAEDQDLAEDLVTR. Residue Asn-153 is modified to Asparagine amide. A propeptide spanning residues 157–170 is cleaved from the precursor; sequence SAEEQDLAEHLVTR. The residue at position 188 (Asn-188) is an Asparagine amide. The propeptide occupies 192–205; it reads SAEEQDLVEDLVTR. The residue at position 223 (Lys-223) is a Lysine amide. Residues 227–240 constitute a propeptide that is removed on maturation; the sequence is SAEEQDLAEDLVTR. Lysine amide is present on Lys-258. Residues 262-270 constitute a propeptide that is removed on maturation; it reads SAEQEKDMK.

This sequence belongs to the maximin-S family. As to expression, expressed by the skin dorsal glands.

The protein localises to the secreted. In terms of biological role, maximin-S1 has no antimicrobial activity. Has no hemolytic activity. Functionally, maximin-S2 has an activity against mycoplasma but has no activity against common Gram-positive and Gram-negative bacteria nor fungi. Has no hemolytic activity. Its function is as follows. Maximin-S3 has an activity against mycoplasma but has no activity against common Gram-positive and Gram-negative bacteria nor fungi. Has no hemolytic activity. Maximin-S4 has an activity against mycoplasma but has no activity against common Gram-positive and Gram-negative bacteria nor fungi. Has no hemolytic activity. In terms of biological role, maximin-S5 has an activity against mycoplasma but has no activity against common Gram-positive and Gram-negative bacteria nor fungi. Has no hemolytic activity. The polypeptide is Maximins-S type D (Bombina maxima (Giant fire-bellied toad)).